A 501-amino-acid polypeptide reads, in one-letter code: L-arabinose isomerase (501 aa).

Mn(2+) is bound by residues E306, E333, H350, and H449.

This sequence belongs to the arabinose isomerase family. Mn(2+) serves as cofactor.

It catalyses the reaction beta-L-arabinopyranose = L-ribulose. Its pathway is carbohydrate degradation; L-arabinose degradation via L-ribulose; D-xylulose 5-phosphate from L-arabinose (bacterial route): step 1/3. In terms of biological role, catalyzes the conversion of L-arabinose to L-ribulose. The protein is L-arabinose isomerase of Mycolicibacterium smegmatis (strain ATCC 700084 / mc(2)155) (Mycobacterium smegmatis).